Consider the following 538-residue polypeptide: GSY2-interacting protein PIG2 (538 aa).

Phosphoserine occurs at positions 162, 196, 296, and 304. The region spanning 384–508 is the CBM21 domain; sequence LNLSRGRPVF…NNDSANYKID (125 aa).

In terms of biological role, interacts with glycogen synthase 2 (GSY2); possibly also interacts with phosphatase 1 (GLC7). This is GSY2-interacting protein PIG2 (PIG2) from Saccharomyces cerevisiae (strain ATCC 204508 / S288c) (Baker's yeast).